Consider the following 80-residue polypeptide: Acyl carrier protein (80 aa).

Residues 4–79 form the Carrier domain; the sequence is EAILEKVRSI…DAVKYIEDKQ (76 aa). At Ser39 the chain carries O-(pantetheine 4'-phosphoryl)serine.

The protein belongs to the acyl carrier protein (ACP) family. Post-translationally, 4'-phosphopantetheine is transferred from CoA to a specific serine of apo-ACP by AcpS. This modification is essential for activity because fatty acids are bound in thioester linkage to the sulfhydryl of the prosthetic group.

The protein resides in the cytoplasm. It functions in the pathway lipid metabolism; fatty acid biosynthesis. Its function is as follows. Carrier of the growing fatty acid chain in fatty acid biosynthesis. This chain is Acyl carrier protein, found in Parasynechococcus marenigrum (strain WH8102).